The chain runs to 285 residues: Small ribosomal subunit protein uS2 (285 aa).

Positions Arg-229–Glu-285 are disordered. Basic and acidic residues predominate over residues Glu-243–Ser-257. Over residues Ala-260 to Glu-275 the composition is skewed to low complexity. Basic and acidic residues predominate over residues Thr-276 to Glu-285.

It belongs to the universal ribosomal protein uS2 family.

The sequence is that of Small ribosomal subunit protein uS2 from Kocuria rhizophila (strain ATCC 9341 / DSM 348 / NBRC 103217 / DC2201).